Reading from the N-terminus, the 206-residue chain is Large ribosomal subunit protein bL25 (206 aa).

Residues 168-206 (DPEESVVTVEVPEDASESTAAPEAAAPAADAAAPAADAK) are disordered. Low complexity predominate over residues 184–206 (ESTAAPEAAAPAADAAAPAADAK).

The protein belongs to the bacterial ribosomal protein bL25 family. CTC subfamily. Part of the 50S ribosomal subunit; part of the 5S rRNA/L5/L18/L25 subcomplex. Contacts the 5S rRNA. Binds to the 5S rRNA independently of L5 and L18.

Functionally, this is one of the proteins that binds to the 5S RNA in the ribosome where it forms part of the central protuberance. In Bifidobacterium longum (strain DJO10A), this protein is Large ribosomal subunit protein bL25.